Here is a 159-residue protein sequence, read N- to C-terminus: MNITIISVGKLKEKYLKLAVEEYSKRLSRYCKLNIIEVTDEKTPDNASEKEELQIKEKEGDLILKNIKDNMFVIALDLNGNELTSIDFSNFINDLGIKGESNLTFVIGGSLGLSSKVLSRSNYKLCFSKMTFPHQLFRVMLLEQIYRGYRIMNGEPYHK.

Residues Leu76, Gly108, and 127–132 (FSKMTF) contribute to the S-adenosyl-L-methionine site.

It belongs to the RNA methyltransferase RlmH family. In terms of assembly, homodimer.

The protein resides in the cytoplasm. It catalyses the reaction pseudouridine(1915) in 23S rRNA + S-adenosyl-L-methionine = N(3)-methylpseudouridine(1915) in 23S rRNA + S-adenosyl-L-homocysteine + H(+). Functionally, specifically methylates the pseudouridine at position 1915 (m3Psi1915) in 23S rRNA. The sequence is that of Ribosomal RNA large subunit methyltransferase H from Clostridium tetani (strain Massachusetts / E88).